The primary structure comprises 142 residues: Small ribosomal subunit protein uS12 (142 aa).

This sequence belongs to the universal ribosomal protein uS12 family. Part of the 30S ribosomal subunit.

In terms of biological role, with S4 and S5 plays an important role in translational accuracy. Located at the interface of the 30S and 50S subunits. This is Small ribosomal subunit protein uS12 from Methanoregula boonei (strain DSM 21154 / JCM 14090 / 6A8).